The following is a 1026-amino-acid chain: Multidrug resistance protein MdtC (1026 aa).

Residues 1–6 (MRFFAL) are Cytoplasmic-facing. A helical membrane pass occupies residues 7-29 (FIYRPVATILIAAAITLCGILGF). Residues 30-335 (RLLPVAPLPQ…TIRASLQEVE (306 aa)) lie on the Periplasmic side of the membrane. A helical membrane pass occupies residues 336-353 (ETLAISVALVILVVFLFL). Topologically, residues 354–359 (RSGRAT) are cytoplasmic. Residues 360–379 (LIPAVAVPVSLIGTFAAMYL) form a helical membrane-spanning segment. Residues 380 to 388 (CGFSLNNLS) lie on the Periplasmic side of the membrane. The chain crosses the membrane as a helical span at residues 389 to 411 (LMALTIATGFVVDDAIVVLENIA). The Cytoplasmic portion of the chain corresponds to 412–430 (RHLEAGMKPLQAALQGTRE). Residues 431-453 (VGFTVISMSLSLVAVFLPLLLMG) traverse the membrane as a helical segment. Over 454-467 (GLPGRLLREFAVTL) the chain is Periplasmic. The helical transmembrane segment at 468-490 (SVAIGISLVVSLTLTPMMCGWML) threads the bilayer. The Cytoplasmic portion of the chain corresponds to 491-852 (KSSKPRTQPR…QVFQQTMNSQ (362 aa)). A helical transmembrane segment spans residues 853–875 (LILIVAAIATVYIVLGILYESYV). Over 876-894 (HPLTILSTLPSAGVGALLA) the chain is Periplasmic. A helical membrane pass occupies residues 895-917 (LELFNAPFSLIALIGIMLLIGIV). Over 918 to 947 (KKNAIMMVDFALEAQRSGGLTPEQAIFQAC) the chain is Cytoplasmic. Residues 948-970 (LLRFRPIMMTTLAALFGALPLVL) form a helical membrane-spanning segment. At 971-984 (SGGDGSELRQPLGI) the chain is on the periplasmic side. Residues 985–1007 (TIVGGLVMSQLLTLYTTPVVYLF) form a helical membrane-spanning segment. Residues 1008–1026 (FDRLRLRFSRKNSKPVVEI) lie on the Cytoplasmic side of the membrane.

It belongs to the resistance-nodulation-cell division (RND) (TC 2.A.6) family. MdtC subfamily. Part of a tripartite efflux system composed of MdtA, MdtB and MdtC. MdtC forms a heteromultimer with MdtB.

It localises to the cell inner membrane. In Salmonella typhimurium (strain LT2 / SGSC1412 / ATCC 700720), this protein is Multidrug resistance protein MdtC.